A 466-amino-acid chain; its full sequence is Collagenase 3 (466 aa).

Residues 1–13 (ATFFLLSWTHCWS) form the signal peptide. Positions 14 to 98 (LPLPYGDDDD…PRCGVPDVGV (85 aa)) are cleaved as a propeptide — activation peptide. The short motif at 89–96 (PRCGVPDV) is the Cysteine switch element. Cysteine 91 is a binding site for Zn(2+). An N-linked (GlcNAc...) asparagine glycan is attached at asparagine 112. Position 123 (aspartate 123) interacts with Ca(2+). A glycan (N-linked (GlcNAc...) asparagine) is linked at asparagine 147. Position 157 (aspartate 157) interacts with Ca(2+). The Zn(2+) site is built by histidine 167 and aspartate 169. The interval 171-241 (YPFDGPSGLL…GALMFPIYTY (71 aa)) is interaction with TIMP2. Positions 174, 175, 177, and 179 each coordinate Ca(2+). Residue histidine 182 coordinates Zn(2+). Residues asparagine 189, glycine 191, and aspartate 193 each coordinate Ca(2+). Histidine 195 contacts Zn(2+). Aspartate 197, aspartate 198, and glutamate 200 together coordinate Ca(2+). A Zn(2+)-binding site is contributed by histidine 217. The active site involves glutamate 218. Positions 221, 227, and 235 each coordinate Zn(2+). The segment at 258-279 (QSLYGPGDEDPNPKHPKTPEKC) is disordered. An interaction with collagen region spans residues 263–466 (PGDEDPNPKH…VMPTNSLLWC (204 aa)). Residues 268-279 (PNPKHPKTPEKC) show a composition bias toward basic and acidic residues. Hemopexin repeat units lie at residues 276–325 (PEKC…WPEL), 326–372 (PNHV…GFPK), 374–422 (VKRL…FPGI), and 423–466 (GDKV…LLWC). A disulfide bond links cysteine 279 and cysteine 466. Ca(2+)-binding residues include aspartate 286, isoleucine 288, aspartate 330, and alanine 332. A Phosphotyrosine; by PKDCC modification is found at tyrosine 361. Residues serine 378 and alanine 380 each contribute to the Ca(2+) site. Residue asparagine 404 is glycosylated (N-linked (GlcNAc...) asparagine). Residues aspartate 427 and valine 429 each contribute to the Ca(2+) site.

Belongs to the peptidase M10A family. Ca(2+) serves as cofactor. Requires Zn(2+) as cofactor. In terms of processing, the proenzyme is activated by removal of the propeptide; this cleavage can be effected by other matrix metalloproteinases, such as MMP2, MMP3 and MMP14 and may involve several cleavage steps. Cleavage can also be autocatalytic, after partial maturation by another protease or after treatment with 4-aminophenylmercuric acetate (APMA) (in vitro). N-glycosylated. Post-translationally, tyrosine phosphorylated by PKDCC/VLK.

The protein resides in the secreted. Its subcellular location is the extracellular space. The protein localises to the extracellular matrix. Plays a role in the degradation of extracellular matrix proteins including fibrillar collagen, fibronectin, TNC and ACAN. Cleaves triple helical collagens, including type I, type II and type III collagen, but has the highest activity with soluble type II collagen. Can also degrade collagen type IV, type XIV and type X. May also function by activating or degrading key regulatory proteins, such as TGFB1 and CCN2. Plays a role in wound healing, tissue remodeling, cartilage degradation, bone development, bone mineralization and ossification. Required for normal embryonic bone development and ossification. Plays a role in the healing of bone fractures via endochondral ossification. Plays a role in wound healing, probably by a mechanism that involves proteolytic activation of TGFB1 and degradation of CCN2. Plays a role in keratinocyte migration during wound healing. May play a role in cell migration and in tumor cell invasion. The polypeptide is Collagenase 3 (Mmp13) (Rattus norvegicus (Rat)).